Reading from the N-terminus, the 434-residue chain is Pre-B-cell leukemia transcription factor 3 (434 aa).

The disordered stretch occupies residues 20–41; the sequence is SVQGGMALPPPPHGHEGADGDG. Residues 32–41 show a composition bias toward basic and acidic residues; the sequence is HGHEGADGDG. The PBC domain occupies 41-234; it reads GRKQDIGDIL…VMILRSRFLD (194 aa). A PBC-A region spans residues 48-127; it reads DILHQIMTIT…EGVSGPEKGG (80 aa). Residues 130-234 form a PBC-B region; that stretch reads AAAAAAAAAS…VMILRSRFLD (105 aa). Positions 235–297 form a DNA-binding region, homeobox; TALE-type; it reads ARRKRRNFSK…NKRIRYKKNI (63 aa). Low complexity predominate over residues 326–341; sequence NQTNSPTTPNSGSSGS. 2 disordered regions span residues 326-349 and 405-434; these read NQTN…NSGD and ANGG…DTSN. The segment covering 405-422 has biased composition (polar residues); it reads ANGGWQDATTPSSVTSPT.

This sequence belongs to the TALE/PBX homeobox family. In terms of assembly, interacts with PBXIP1.

The protein localises to the nucleus. Its function is as follows. Transcriptional activator that binds the sequence 5'-ATCAATCAA-3'. In Mus musculus (Mouse), this protein is Pre-B-cell leukemia transcription factor 3 (Pbx3).